The chain runs to 510 residues: Light-independent protochlorophyllide reductase subunit B (510 aa).

D36 is a [4Fe-4S] cluster binding site. D296 serves as the catalytic Proton donor. 431–432 provides a ligand contact to substrate; that stretch reads GM.

The protein belongs to the ChlB/BchB/BchZ family. In terms of assembly, protochlorophyllide reductase is composed of three subunits; ChlL, ChlN and ChlB. Forms a heterotetramer of two ChlB and two ChlN subunits. It depends on [4Fe-4S] cluster as a cofactor.

The protein localises to the plastid. It is found in the chloroplast. It catalyses the reaction chlorophyllide a + oxidized 2[4Fe-4S]-[ferredoxin] + 2 ADP + 2 phosphate = protochlorophyllide a + reduced 2[4Fe-4S]-[ferredoxin] + 2 ATP + 2 H2O. It functions in the pathway porphyrin-containing compound metabolism; chlorophyll biosynthesis (light-independent). In terms of biological role, component of the dark-operative protochlorophyllide reductase (DPOR) that uses Mg-ATP and reduced ferredoxin to reduce ring D of protochlorophyllide (Pchlide) to form chlorophyllide a (Chlide). This reaction is light-independent. The NB-protein (ChlN-ChlB) is the catalytic component of the complex. In Chlorokybus atmophyticus (Soil alga), this protein is Light-independent protochlorophyllide reductase subunit B.